A 347-amino-acid chain; its full sequence is UDP-N-acetylenolpyruvoylglucosamine reductase (347 aa).

The 172-residue stretch at 16–187 (AIEQCSHYLV…IAVGLKLPKT (172 aa)) folds into the FAD-binding PCMH-type domain. R163 is an active-site residue. S233 serves as the catalytic Proton donor. Residue E328 is part of the active site.

It belongs to the MurB family. FAD is required as a cofactor.

The protein resides in the cytoplasm. It carries out the reaction UDP-N-acetyl-alpha-D-muramate + NADP(+) = UDP-N-acetyl-3-O-(1-carboxyvinyl)-alpha-D-glucosamine + NADPH + H(+). The protein operates within cell wall biogenesis; peptidoglycan biosynthesis. Cell wall formation. The sequence is that of UDP-N-acetylenolpyruvoylglucosamine reductase from Vibrio vulnificus (strain YJ016).